Consider the following 462-residue polypeptide: Acetate--CoA ligase [ADP-forming] I subunit alpha (462 aa).

The protein belongs to the acetate CoA ligase alpha subunit family. In terms of assembly, heterotetramer of two alpha and two beta subunits.

It localises to the cytoplasm. It carries out the reaction acetate + ATP + CoA = acetyl-CoA + ADP + phosphate. With respect to regulation, activity is dependent on magnesium. Catalyzes the reversible formation of acetate and ATP from acetyl-CoA by using ADP and phosphate. Can use other substrates such as isobutyryl-CoA, propionyl-CoA and butyryl-CoA, but not indoleacetyl-CoA, phenylacetyl-CoA or succinyl-CoA. Seems to be involved primarily in the conversion of acetyl-CoA to acetate. Participates in the degradation of branched-chain amino acids via branched-chain-acyl-CoA esters. The sequence is that of Acetate--CoA ligase [ADP-forming] I subunit alpha from Pyrococcus furiosus (strain ATCC 43587 / DSM 3638 / JCM 8422 / Vc1).